The primary structure comprises 345 residues: Galacturonate transporter (345 aa).

A signal peptide spans 1–32 (MFKIKGLRWYMIGLVTIGTVLGYLTRNAIAAA). The next 8 membrane-spanning stretches (helical) occupy residues 49–69 (YIIA…GYVL), 76–96 (VGYA…ALAN), 100–120 (GLAV…PAGL), 139–159 (FNVG…WAIM), 165–185 (MAFL…LYFY), 237–257 (FLAE…MFKA), 265–285 (IAMF…LGGY), and 304–324 (LVVT…LFTS).

This sequence belongs to the major facilitator superfamily. Phthalate permease family.

It localises to the cell inner membrane. It carries out the reaction aldehydo-D-galacturonate(out) + H(+)(out) = aldehydo-D-galacturonate(in) + H(+)(in). With respect to regulation, inhibited by cyanide and 2,4-dinitrophenol, but not by arsenate. Transport of D-galacturonate. Cannot transport the dimer digalacturonic acid. Uptake is an active process. The protein is Galacturonate transporter of Dickeya chrysanthemi (Pectobacterium chrysanthemi).